The chain runs to 1108 residues: Retinal guanylyl cyclase 1 (1108 aa).

Positions 1 to 54 are cleaved as a signal peptide; the sequence is MSAWLLPAGGLPGAGFCVPARQSPSSFSRVLRWPRPGLPGLLLLLLLPSPSALS. The Extracellular segment spans residues 55–465; sequence AVFKVGVLGP…PDVICNGGVE (411 aa). A disulfide bridge links Cys108 with Cys136. Asn300 carries N-linked (GlcNAc...) asparagine glycosylation. Residues 466-490 form a helical membrane-spanning segment; it reads PGLVFVGFLLVIGMGLTGAFLAHYL. The region spanning 491 to 811 is the Protein kinase domain; it reads RHRLLHMQMA…DLTFDLFKSI (321 aa). Residues 491–1108 are Cytoplasmic-facing; that stretch reads RHRLLHMQMA…KARPGQFTGK (618 aa). Positions 883–1013 constitute a Guanylate cyclase domain; that stretch reads TLYFSDIVGF…DTVNTASRME (131 aa). Positions 1069–1108 are disordered; it reads IPKPPDLQPGASNHGISLQEIPPERRKKLEKARPGQFTGK.

It belongs to the adenylyl cyclase class-4/guanylyl cyclase family. As to quaternary structure, homodimer; requires homodimerization for guanylyl cyclase activity. Interacts (via C-terminus) with RD3 (via C-terminus); promotes the exit of GUCY2E from the endoplasmic reticulum and its trafficking to the photoreceptor outer segments. Interaction with RD3 negatively regulates GUCY2E guanylate cyclase activity. There are 9 conserved cysteine residues in sensory guanylate cyclases, 6 in the extracellular domain, which may be involved in intra- or interchain disulfide bonds.

The protein resides in the photoreceptor outer segment membrane. It localises to the endoplasmic reticulum membrane. The catalysed reaction is GTP = 3',5'-cyclic GMP + diphosphate. Activated by GUCA1A when free calcium ions concentration is low, and inhibited by GUCA1A when free calcium ions concentration is high. Negatively regulated by RD3; RD3 inhibits the basal and GUCA1A-stimulated guanylate cyclase activity. Catalyzes the synthesis of cyclic GMP (cGMP) in rods and cones of photoreceptors. Plays an essential role in phototransduction, by mediating cGMP replenishment. May also participate in the trafficking of membrane-asociated proteins to the photoreceptor outer segment membrane. The sequence is that of Retinal guanylyl cyclase 1 (Gucy2e) from Mus musculus (Mouse).